A 430-amino-acid polypeptide reads, in one-letter code: Maltoporin (430 aa).

A signal peptide spans 1-23 (MNNKKTLLAVAISGMMFATSAAA).

It belongs to the porin LamB (TC 1.B.3) family. As to quaternary structure, homotrimer formed of three 18-stranded antiparallel beta-barrels, containing three independent channels.

Its subcellular location is the cell outer membrane. It catalyses the reaction beta-maltose(in) = beta-maltose(out). Functionally, involved in the transport of maltose and maltodextrins. In Actinobacillus succinogenes (strain ATCC 55618 / DSM 22257 / CCUG 43843 / 130Z), this protein is Maltoporin.